A 917-amino-acid polypeptide reads, in one-letter code: Protein translocase subunit SecA (917 aa).

ATP is bound by residues Q87, 105–109, and D516; that span reads GEGKT. Zn(2+) is bound by residues C901, C903, C912, and H913.

This sequence belongs to the SecA family. As to quaternary structure, monomer and homodimer. Part of the essential Sec protein translocation apparatus which comprises SecA, SecYEG and auxiliary proteins SecDF-YajC and YidC. Zn(2+) is required as a cofactor.

It is found in the cell inner membrane. The protein resides in the cytoplasm. It carries out the reaction ATP + H2O + cellular proteinSide 1 = ADP + phosphate + cellular proteinSide 2.. Its function is as follows. Part of the Sec protein translocase complex. Interacts with the SecYEG preprotein conducting channel. Has a central role in coupling the hydrolysis of ATP to the transfer of proteins into and across the cell membrane, serving both as a receptor for the preprotein-SecB complex and as an ATP-driven molecular motor driving the stepwise translocation of polypeptide chains across the membrane. The sequence is that of Protein translocase subunit SecA from Acidovorax sp. (strain JS42).